The following is a 172-amino-acid chain: uncharacterized protein (172 aa).

This is an uncharacterized protein from Homo sapiens (Human).